Consider the following 155-residue polypeptide: Small ribosomal subunit protein uS7 (155 aa).

The protein belongs to the universal ribosomal protein uS7 family. In terms of assembly, part of the 30S ribosomal subunit. Contacts proteins S9 and S11.

One of the primary rRNA binding proteins, it binds directly to 16S rRNA where it nucleates assembly of the head domain of the 30S subunit. Is located at the subunit interface close to the decoding center, probably blocks exit of the E-site tRNA. The chain is Small ribosomal subunit protein uS7 from Thermotoga maritima (strain ATCC 43589 / DSM 3109 / JCM 10099 / NBRC 100826 / MSB8).